Consider the following 900-residue polypeptide: Isoleucine--tRNA ligase (900 aa).

The 'HIGH' region signature appears at 58 to 68 (PYANGNIHIGH). Glu-552 contacts L-isoleucyl-5'-AMP. Residues 593–597 (KMSKS) carry the 'KMSKS' region motif. Position 596 (Lys-596) interacts with ATP.

This sequence belongs to the class-I aminoacyl-tRNA synthetase family. IleS type 1 subfamily. Monomer.

The protein localises to the cytoplasm. The catalysed reaction is tRNA(Ile) + L-isoleucine + ATP = L-isoleucyl-tRNA(Ile) + AMP + diphosphate. Functionally, catalyzes the attachment of isoleucine to tRNA(Ile). As IleRS can inadvertently accommodate and process structurally similar amino acids such as valine, to avoid such errors it has two additional distinct tRNA(Ile)-dependent editing activities. One activity is designated as 'pretransfer' editing and involves the hydrolysis of activated Val-AMP. The other activity is designated 'posttransfer' editing and involves deacylation of mischarged Val-tRNA(Ile). This is Isoleucine--tRNA ligase from Ureaplasma parvum serovar 3 (strain ATCC 700970).